We begin with the raw amino-acid sequence, 391 residues long: Ferrochelatase (391 aa).

2 residues coordinate Fe cation: His196 and Glu281.

Belongs to the ferrochelatase family.

The protein resides in the cytoplasm. It catalyses the reaction heme b + 2 H(+) = protoporphyrin IX + Fe(2+). The protein operates within porphyrin-containing compound metabolism; protoheme biosynthesis; protoheme from protoporphyrin-IX: step 1/1. Its function is as follows. Catalyzes the ferrous insertion into protoporphyrin IX. The polypeptide is Ferrochelatase (Synechococcus sp. (strain CC9311)).